A 568-amino-acid chain; its full sequence is Probable inactive poly [ADP-ribose] polymerase SRO1 (568 aa).

Residues 1–18 show a composition bias toward basic and acidic residues; the sequence is MEAKIVKVSDSSYKDGLG. The interval 1 to 32 is disordered; it reads MEAKIVKVSDSSYKDGLGKKRKHPGNYTPYDS. Positions 77–152 constitute a WWE domain; it reads RYFSYYKKTG…ETGVKTQLAW (76 aa). Disordered stretches follow at residues 220-241 and 453-500; these read DFQA…DSCS and ILPT…RRPR. The PARP catalytic domain maps to 245–463; that stretch reads DDAVEKWDKT…LPTTQSRHES (219 aa). Residues 497 to 568 enclose the RST domain; the sequence is RRPRSPIMPF…TITGLQRSLG (72 aa).

Interacts with DREB2A, DREB2B, DREB2C and NAC082. In terms of tissue distribution, expressed in young developing tissues, such as young leaves and flowers and root tips. In mature plants, expressed in vasculature of leaves and roots.

Its subcellular location is the nucleus matrix. Functionally, probable inactive ADP-ribosyltransferase that functions with RCD1 to regulate oxidative stress, hormonal and developmental responses. May regulate some stress-responsive genes. Seems to play a smaller developmental role than R. In Arabidopsis thaliana (Mouse-ear cress), this protein is Probable inactive poly [ADP-ribose] polymerase SRO1 (SRO1).